We begin with the raw amino-acid sequence, 115 residues long: Vespryn (115 aa).

A signal peptide spans 1–15; it reads MTWLLLCLLAQYENG. A B30.2/SPRY domain is found at 22–115; it reads SSSAKPYKTS…VKRKDHLRLT (94 aa).

Belongs to the ohanin/vespryn family. As to expression, expressed by the venom gland.

The protein resides in the secreted. In terms of biological role, neurotoxin that produces dose-dependent hypolocomotion and hyperalgesia in mice. May directly act on the central nervous system, as it is 6500-fold more potent when administered intracerebroventricularly than intraperitoneal. The protein is Vespryn of Pogona barbata (Bearded dragon).